The sequence spans 61 residues: Alpha-conotoxin EIIA (61 aa).

Positions 1–16 are cleaved as a signal peptide; the sequence is MFIVFLLVVLATTVGS. The propeptide occupies 17–40; it reads FTLDRVLEGRNAAAIDNALDQRDP. At glutamine 43 the chain carries Pyrrolidone carboxylic acid. Proline 45 is modified (hydroxyproline). 2 cysteine pairs are disulfide-bonded: cysteine 47–cysteine 53 and cysteine 48–cysteine 58. Cysteine amide is present on cysteine 58.

This sequence belongs to the conotoxin A superfamily. In terms of tissue distribution, expressed by the venom duct.

The protein localises to the secreted. Functionally, alpha-conotoxins bind to the nicotinic acetylcholine receptors (nAChR) and inhibit them. This peptide potently blocks muscular nicotinic acetylcholine receptor (CHRNA1-CHRNB1-CHRNG-CHRND), and has no effect on neuronal receptors. It is able to totally displace [125I]-Bgtx from the Torpedo receptor with a complete inhibition in the high micromolar range. It produces a biphasic inhibition curve which fits nicely with a two-site model (Ki of 0.46 and 105 nM). The sequence is that of Alpha-conotoxin EIIA from Conus ermineus (Agate cone).